The chain runs to 458 residues: F-box/WD repeat-containing protein 9 (458 aa).

The residue at position 1 (methionine 1) is an N-acetylmethionine. 2 disordered regions span residues 1 to 30 (MELPLGRCDDSRTWDDDSDPESETDPDAQA) and 42 to 64 (KSGLAFSRPSQLSTPAASPSASE). The segment covering 16–26 (DDSDPESETDP) has biased composition (acidic residues). Serine 18 is modified (phosphoserine). Residue threonine 55 is modified to Phosphothreonine. The residue at position 59 (serine 59) is a Phosphoserine. The F-box domain occupies 76 to 123 (EPGLLSLPPELLLEICSYLDARLVLHVLSRVCHALRDLVSDHVTWRLR). WD repeat units follow at residues 171–210 (GHVASVDSVLLLQGGSLCLSGSRDRNVNLWDLRQLGTESN), 220–261 (KRNS…QQFG), 264–301 (KASSAVLCLSYLPDILVTGTYDKKVTIYDPRAGPALLK), 305–342 (LHSRPVLTLLADDRHIISGSEDHTLVVVDRRANSVLQR), 344–381 (QLDSYLLCMSYQEPQLWAGDNQGLLHVFANRNGCFQLI), 387–424 (GHSFPITGIQYSVGALYTTSTDKTIRVHVPTDPPRTIC), and 427–458 (RHDNGLNRVCAEGNLVVAGSGDLSLEVWRLQA).

In terms of assembly, interacts with SKP1 and CUL1.

Substrate-recognition component of the SCF (SKP1-CUL1-F-box protein)-type E3 ubiquitin ligase complex. This chain is F-box/WD repeat-containing protein 9 (FBXW9), found in Homo sapiens (Human).